The sequence spans 120 residues: MTNLAVKYKQQAQEEVQIQTPPQQMAKPKVKAKITRIEKLLYVAFIGFLLYACVAFIGNKAGLYQVNVEAATIEEKIVQQQKENQELQAEVEKLSRYERIAEVAKKHGLEINANNVKGLK.

The Cytoplasmic segment spans residues 1–36 (MTNLAVKYKQQAQEEVQIQTPPQQMAKPKVKAKITR). A helical transmembrane segment spans residues 37-57 (IEKLLYVAFIGFLLYACVAFI). Over 58-120 (GNKAGLYQVN…INANNVKGLK (63 aa)) the chain is Extracellular.

It belongs to the FtsL family.

It is found in the cell membrane. Its function is as follows. Essential cell division protein. The polypeptide is Cell division protein FtsL (Bacillus cereus (strain ATCC 14579 / DSM 31 / CCUG 7414 / JCM 2152 / NBRC 15305 / NCIMB 9373 / NCTC 2599 / NRRL B-3711)).